A 1489-amino-acid chain; its full sequence is WD repeat-containing protein 7 (1489 aa).

7 WD repeats span residues 17-56, 62-104, 156-199, 324-366, 404-443, 462-507, and 558-597; these read APTH…EVNP, GHTA…CIEF, ISPD…SGMQ, VICP…EKQE, NEPL…IVQL, GHRN…MKHI, and RHLF…LDRC. Disordered stretches follow at residues 754-783 and 911-947; these read IKEH…YRAS and GDHM…QGQI. A compositionally biased stretch (basic and acidic residues) spans 767–782; it reads EARRQSREDSDPEYRA. Residue Ser935 is modified to Phosphoserine. WD repeat units follow at residues 1350 to 1389 and 1391 to 1431; these read PAIC…CQTI and GHKG…LGSI. Position 1455 is a phosphoserine (Ser1455).

This Mus musculus (Mouse) protein is WD repeat-containing protein 7 (Wdr7).